The following is a 300-amino-acid chain: HTH-type transcriptional activator NahR (300 aa).

The 58-residue stretch at 6-63 (LDLNLLVVFNQLLVDRRVSITAENLGLTQPAVSNALKRLRTSLQDPLFVRTHQGMEPT) folds into the HTH lysR-type domain. Residues 23–42 (VSITAENLGLTQPAVSNALK) constitute a DNA-binding region (H-T-H motif).

The protein belongs to the LysR transcriptional regulatory family.

It localises to the cytoplasm. Its function is as follows. Regulates the expression of the naphthalene (nahA-F) and salicylate (nahG-M) metabolism genes. This chain is HTH-type transcriptional activator NahR (nahR), found in Pseudomonas putida (Arthrobacter siderocapsulatus).